Consider the following 776-residue polypeptide: LPS-assembly protein LptD (776 aa).

Residues 1 to 24 form the signal peptide; sequence MQHFSRTFLAASIATALFAPYAQA.

This sequence belongs to the LptD family. Component of the lipopolysaccharide transport and assembly complex. Interacts with LptE and LptA.

It is found in the cell outer membrane. In terms of biological role, together with LptE, is involved in the assembly of lipopolysaccharide (LPS) at the surface of the outer membrane. This Vibrio vulnificus (strain YJ016) protein is LPS-assembly protein LptD.